We begin with the raw amino-acid sequence, 467 residues long: ATP synthase subunit beta (467 aa).

157–164 (GGAGVGKT) lines the ATP pocket.

Belongs to the ATPase alpha/beta chains family. F-type ATPases have 2 components, CF(1) - the catalytic core - and CF(0) - the membrane proton channel. CF(1) has five subunits: alpha(3), beta(3), gamma(1), delta(1), epsilon(1). CF(0) has three main subunits: a(1), b(2) and c(9-12). The alpha and beta chains form an alternating ring which encloses part of the gamma chain. CF(1) is attached to CF(0) by a central stalk formed by the gamma and epsilon chains, while a peripheral stalk is formed by the delta and b chains.

The protein localises to the cell inner membrane. It carries out the reaction ATP + H2O + 4 H(+)(in) = ADP + phosphate + 5 H(+)(out). Functionally, produces ATP from ADP in the presence of a proton gradient across the membrane. The catalytic sites are hosted primarily by the beta subunits. In Desulfosudis oleivorans (strain DSM 6200 / JCM 39069 / Hxd3) (Desulfococcus oleovorans), this protein is ATP synthase subunit beta.